A 416-amino-acid polypeptide reads, in one-letter code: Cyclin-dependent kinase 8 (416 aa).

Positions 1 to 15 are interaction with CCNC; that stretch reads MDYDFKVKLTGERER. Residues 21-287 enclose the Protein kinase domain; sequence EYEGCKVGRG…SEQAMQDPYF (267 aa). ATP is bound by residues 27–35 and Lys-52; that span reads VGRGTYGHV. Catalysis depends on Asp-151, which acts as the Proton acceptor. The tract at residues 313 to 416 is disordered; it reads EEEPDDKGDK…PQYSHQTHRY (104 aa). Low complexity predominate over residues 325–343; the sequence is QQQQQGNNHTNGTGHPGNQ. Composition is skewed to polar residues over residues 361–378 and 386–416; these read PTTTSGGLIMTSDYQRSN and PGPSTSQPQSSMGYTSTSQQPPQYSHQTHRY.

Belongs to the protein kinase superfamily. CMGC Ser/Thr protein kinase family. CDC2/CDKX subfamily. In terms of assembly, component of the Mediator complex. Interacts with ccnc. Mg(2+) is required as a cofactor.

The protein resides in the nucleus. The catalysed reaction is L-seryl-[protein] + ATP = O-phospho-L-seryl-[protein] + ADP + H(+). It catalyses the reaction L-threonyl-[protein] + ATP = O-phospho-L-threonyl-[protein] + ADP + H(+). The enzyme catalyses [DNA-directed RNA polymerase] + ATP = phospho-[DNA-directed RNA polymerase] + ADP + H(+). In terms of biological role, component of the Mediator complex, a coactivator involved in regulated gene transcription of nearly all RNA polymerase II-dependent genes. Mediator functions as a bridge to convey information from gene-specific regulatory proteins to the basal RNA polymerase II transcription machinery. Mediator is recruited to promoters by direct interactions with regulatory proteins and serves as a scaffold for the assembly of a functional pre-initiation complex with RNA polymerase II and the general transcription factors. Phosphorylates the CTD (C-terminal domain) of the large subunit of RNA polymerase II (RNAp II), which may inhibit the formation of a transcription initiation complex. This is Cyclin-dependent kinase 8 (cdk8) from Xenopus laevis (African clawed frog).